The following is a 119-amino-acid chain: Large ribosomal subunit protein bL20 (119 aa).

It belongs to the bacterial ribosomal protein bL20 family.

Binds directly to 23S ribosomal RNA and is necessary for the in vitro assembly process of the 50S ribosomal subunit. It is not involved in the protein synthesizing functions of that subunit. The protein is Large ribosomal subunit protein bL20 of Sorangium cellulosum (strain So ce56) (Polyangium cellulosum (strain So ce56)).